The chain runs to 454 residues: Tryptophanase (454 aa).

Lys-256 is modified (N6-(pyridoxal phosphate)lysine).

The protein belongs to the beta-eliminating lyase family. Homotetramer. The cofactor is pyridoxal 5'-phosphate.

It catalyses the reaction L-tryptophan + H2O = indole + pyruvate + NH4(+). Its pathway is amino-acid degradation; L-tryptophan degradation via pyruvate pathway; indole and pyruvate from L-tryptophan: step 1/1. The polypeptide is Tryptophanase (Hyphomonas neptunium (strain ATCC 15444)).